The primary structure comprises 287 residues: ATP synthase gamma chain (287 aa).

The protein belongs to the ATPase gamma chain family. In terms of assembly, F-type ATPases have 2 components, CF(1) - the catalytic core - and CF(0) - the membrane proton channel. CF(1) has five subunits: alpha(3), beta(3), gamma(1), delta(1), epsilon(1). CF(0) has three main subunits: a, b and c. The F(1)F(0) complex interacts with SpoIIIJ and YqjG; YqgA is found in the same complex. Interacts with FloT.

Its subcellular location is the cell membrane. The protein resides in the membrane raft. Produces ATP from ADP in the presence of a proton gradient across the membrane. The gamma chain is believed to be important in regulating ATPase activity and the flow of protons through the CF(0) complex. This Bacillus subtilis (strain 168) protein is ATP synthase gamma chain.